Consider the following 285-residue polypeptide: Bifunctional protein FolD (285 aa).

Residues 165-167, serine 190, and isoleucine 231 each bind NADP(+); that span reads GRS.

The protein belongs to the tetrahydrofolate dehydrogenase/cyclohydrolase family. As to quaternary structure, homodimer.

It carries out the reaction (6R)-5,10-methylene-5,6,7,8-tetrahydrofolate + NADP(+) = (6R)-5,10-methenyltetrahydrofolate + NADPH. It catalyses the reaction (6R)-5,10-methenyltetrahydrofolate + H2O = (6R)-10-formyltetrahydrofolate + H(+). The protein operates within one-carbon metabolism; tetrahydrofolate interconversion. In terms of biological role, catalyzes the oxidation of 5,10-methylenetetrahydrofolate to 5,10-methenyltetrahydrofolate and then the hydrolysis of 5,10-methenyltetrahydrofolate to 10-formyltetrahydrofolate. This Magnetococcus marinus (strain ATCC BAA-1437 / JCM 17883 / MC-1) protein is Bifunctional protein FolD.